The sequence spans 1263 residues: Condensin complex subunit dpy-26 (1263 aa).

The segment covering Met-1 to Thr-10 has biased composition (polar residues). A disordered region spans residues Met-1–Thr-29. Positions Asn-691–Met-725 form a coiled coil. Disordered regions lie at residues Tyr-1098–Asn-1118 and Phe-1225–Glu-1263. Over residues Asn-1106–Asn-1118 the composition is skewed to polar residues. The span at Arg-1230 to Arg-1241 shows a compositional bias: basic residues.

As to quaternary structure, component of the condensin I complex, which contains the mix-1/SMC2 and smc-4/SMC4 heterodimer, and three non SMC subunits that probably regulate the complex: dpy-26, capg-1 and dpy-28. Within the complex, interacts with dpy-28, mix-1, smc-4 and capg-1. Component of the dosage compensation complex, which consists of the condensin I-like components mix-1/SMC2 and dpy-27/SMC4, and the three non SMC subunits dpy-26, capg-1 and dpy-28. Within the complex, interacts with dpy-27, dpy-28, mix-1 and capg-1. The interaction with dpy-27 is required for dpy-27 protein stability. Interacts with smcl-1. As to expression, expressed in embryos and in somatic and germline tissues in L4 stage larvae (at protein level).

The protein localises to the nucleus. It localises to the chromosome. Its function is as follows. Required for both chromosome condensation and segregation and for X-chromosome dosage compensation depending on its binding partners. Member of the condensin I complex, a complex required for conversion of interphase chromatin into mitotic-like condense chromosomes and for proper chromosome segregation in mitosis and meiosis. As a member of the condensin I complex, further controls the crossover number and distribution in meiosis by restricting double strand break formation, probably by influencing higher-order chromosome structure. Plays a role in robust cytokinesis upon presence of chromatin obstructions. Also a member of the condensin I-like dosage compensation complex that associates specifically with hermaphrodite X chromosomes to reduce their gene transcription during interphase, possibly through chromatin reorganization. As a member of the dosage compensation complex, also binds to regulatory regions of the autosomal her-1 gene, required for male development, possibly contributing to its repression in hermaphrodites. The chain is Condensin complex subunit dpy-26 from Caenorhabditis elegans.